A 452-amino-acid chain; its full sequence is Bifunctional protein GlmU (452 aa).

The tract at residues methionine 1–lysine 225 is pyrophosphorylase. UDP-N-acetyl-alpha-D-glucosamine-binding positions include leucine 6 to glycine 9, lysine 20, glutamine 71, glycine 76 to threonine 77, tyrosine 98 to aspartate 100, glycine 135, glutamate 150, asparagine 165, and asparagine 223. A Mg(2+)-binding site is contributed by aspartate 100. Asparagine 223 serves as a coordination point for Mg(2+). A linker region spans residues proline 226 to aspartate 246. Residues glycine 247–arginine 452 form an N-acetyltransferase region. Positions 329 and 347 each coordinate UDP-N-acetyl-alpha-D-glucosamine. The Proton acceptor role is filled by histidine 359. Tyrosine 362 and asparagine 373 together coordinate UDP-N-acetyl-alpha-D-glucosamine. Residues alanine 376, asparagine 382–tyrosine 383, serine 401, alanine 419, and arginine 436 each bind acetyl-CoA.

The protein in the N-terminal section; belongs to the N-acetylglucosamine-1-phosphate uridyltransferase family. It in the C-terminal section; belongs to the transferase hexapeptide repeat family. Homotrimer. Mg(2+) is required as a cofactor.

It is found in the cytoplasm. The catalysed reaction is alpha-D-glucosamine 1-phosphate + acetyl-CoA = N-acetyl-alpha-D-glucosamine 1-phosphate + CoA + H(+). It carries out the reaction N-acetyl-alpha-D-glucosamine 1-phosphate + UTP + H(+) = UDP-N-acetyl-alpha-D-glucosamine + diphosphate. Its pathway is nucleotide-sugar biosynthesis; UDP-N-acetyl-alpha-D-glucosamine biosynthesis; N-acetyl-alpha-D-glucosamine 1-phosphate from alpha-D-glucosamine 6-phosphate (route II): step 2/2. It functions in the pathway nucleotide-sugar biosynthesis; UDP-N-acetyl-alpha-D-glucosamine biosynthesis; UDP-N-acetyl-alpha-D-glucosamine from N-acetyl-alpha-D-glucosamine 1-phosphate: step 1/1. It participates in bacterial outer membrane biogenesis; LPS lipid A biosynthesis. Catalyzes the last two sequential reactions in the de novo biosynthetic pathway for UDP-N-acetylglucosamine (UDP-GlcNAc). The C-terminal domain catalyzes the transfer of acetyl group from acetyl coenzyme A to glucosamine-1-phosphate (GlcN-1-P) to produce N-acetylglucosamine-1-phosphate (GlcNAc-1-P), which is converted into UDP-GlcNAc by the transfer of uridine 5-monophosphate (from uridine 5-triphosphate), a reaction catalyzed by the N-terminal domain. The chain is Bifunctional protein GlmU from Azoarcus sp. (strain BH72).